A 489-amino-acid polypeptide reads, in one-letter code: Metalloreductase STEAP2 (489 aa).

Residues 37–40 (SGDF), 59–60 (SR), 92–99 (IHREHYTS), Asn-117, and Ala-150 contribute to the NADP(+) site. FAD contacts are provided by Trp-151 and Asp-159. Residues 207–227 (LFTLWRGPVVVAISLATFFFL) form a helical membrane-spanning segment. Residue Tyr-228 coordinates Fe(3+). The helical transmembrane segment at 258 to 278 (LPIVAITLLSLVYLAGLLAAA) threads the bilayer. The 149-residue stretch at 258–406 (LPIVAITLLS…LGYVALLITT (149 aa)) folds into the Ferric oxidoreductase domain. FAD is bound by residues Gln-280 and Arg-301. The next 4 helical transmembrane spans lie at 304–324 (LGLLSFFFAVVHVAYSLCLPM), 358–378 (MYISFGIMSLGLLSLLAVTSI), 392–412 (FIQSTLGYVALLITTFHVLIY), and 431–451 (FVLALVLPSIVILGKMILLLP). His-315 lines the heme b pocket. Tyr-318 provides a ligand contact to Fe(3+). FAD is bound by residues Ser-377 and Gln-394. His-408 contacts heme b. Ser-482 is modified (phosphoserine).

Belongs to the STEAP family. The cofactor is FAD. Requires heme b as cofactor.

The protein localises to the cell membrane. Its subcellular location is the endosome membrane. The enzyme catalyses 2 Fe(2+) + NADP(+) + H(+) = 2 Fe(3+) + NADPH. The catalysed reaction is 2 Cu(+) + NADP(+) + H(+) = 2 Cu(2+) + NADPH. In terms of biological role, integral membrane protein that functions as a NADPH-dependent ferric-chelate reductase, using NADPH from one side of the membrane to reduce a Fe(3+) chelate that is bound on the other side of the membrane. Mediates sequential transmembrane electron transfer from NADPH to FAD and onto heme, and finally to the Fe(3+) chelate. Can also reduce Cu(2+) to Cu(1+). The polypeptide is Metalloreductase STEAP2 (Steap2) (Mus musculus (Mouse)).